We begin with the raw amino-acid sequence, 133 residues long: Large ribosomal subunit protein bL19 (133 aa).

Belongs to the bacterial ribosomal protein bL19 family.

Functionally, this protein is located at the 30S-50S ribosomal subunit interface and may play a role in the structure and function of the aminoacyl-tRNA binding site. The sequence is that of Large ribosomal subunit protein bL19 from Stenotrophomonas maltophilia (strain K279a).